The sequence spans 73 residues: ComX pheromone (73 aa).

The propeptide occupies 1-52; it reads MKHIDKIISHLVNNPEAFDQFKNGNLTLLNINEKEKKAILYAFEQGEVPRTS. The 3'-farnesyl-2',N2-cyclotryptophan moiety is linked to residue Trp54. A propeptide spanning residues 59-73 is cleaved from the precursor; sequence AISNFFEDDKRKSLI.

Interacts directly with the sensor histidine kinase ComP and stimulates its activity. Post-translationally, trp-54 is modified by farnesylation, which is essential for activity. Modified by the tryptophan prenyltransferase ComQ before export to the extracellular environment.

The protein localises to the secreted. Functionally, part of a major quorum-sensing system that regulates the development of genetic competence. Acts through the activation of the two-component regulatory system ComP/ComA composed of a sensor histidine kinase, ComP, and a response regulator, ComA. Activates the expression of the genes for biosynthesis of poly-gamma-glutamic acid (gamma-PGA), which is involved in biofilm formation in B.subtilis natto. This chain is ComX pheromone, found in Bacillus subtilis subsp. natto (strain BEST195).